The primary structure comprises 94 residues: Integration host factor subunit beta (94 aa).

It belongs to the bacterial histone-like protein family. Heterodimer of an alpha and a beta chain.

This protein is one of the two subunits of integration host factor, a specific DNA-binding protein that functions in genetic recombination as well as in transcriptional and translational control. This chain is Integration host factor subunit beta, found in Vibrio campbellii (strain ATCC BAA-1116).